Consider the following 89-residue polypeptide: Small ribosomal subunit protein uS15 (89 aa).

The protein belongs to the universal ribosomal protein uS15 family. In terms of assembly, part of the 30S ribosomal subunit. Forms a bridge to the 50S subunit in the 70S ribosome, contacting the 23S rRNA.

One of the primary rRNA binding proteins, it binds directly to 16S rRNA where it helps nucleate assembly of the platform of the 30S subunit by binding and bridging several RNA helices of the 16S rRNA. In terms of biological role, forms an intersubunit bridge (bridge B4) with the 23S rRNA of the 50S subunit in the ribosome. This Jannaschia sp. (strain CCS1) protein is Small ribosomal subunit protein uS15.